Reading from the N-terminus, the 403-residue chain is Tryptophan synthase beta chain (403 aa).

An N6-(pyridoxal phosphate)lysine modification is found at lysine 96.

Belongs to the TrpB family. In terms of assembly, tetramer of two alpha and two beta chains. The cofactor is pyridoxal 5'-phosphate.

It carries out the reaction (1S,2R)-1-C-(indol-3-yl)glycerol 3-phosphate + L-serine = D-glyceraldehyde 3-phosphate + L-tryptophan + H2O. Its pathway is amino-acid biosynthesis; L-tryptophan biosynthesis; L-tryptophan from chorismate: step 5/5. Its function is as follows. The beta subunit is responsible for the synthesis of L-tryptophan from indole and L-serine. The protein is Tryptophan synthase beta chain of Ralstonia nicotianae (strain ATCC BAA-1114 / GMI1000) (Ralstonia solanacearum).